We begin with the raw amino-acid sequence, 582 residues long: MTDATINLHADFARVIDAALDALEAAGTLPGTLSRSAVTCEPPRDPSHGDLATNAAMVLAKPAGTNPRALATALAAELEKEPRVVSAEIAGPGFINLRLTDDAWRGELALIGSAGADYGRSTMGGSKVVNVEYVSANPTGPMHMGHCRGAVVGDALADLLAFSGHQVIKEYYVNDAGAQVDVLARSVHMRYREALGETVEIPEGLYPGDYLVPVGKALAEEFGDKYAKAAEADWLILFRTRAVAAMMDMIRSDLATLGIHHDLFSSEAELQASGKVDAAEQWLRAHDLVYDGLLEAPKGKTPEDWEPVVLPLFRSTKFGDDQDRPIKKSNGAWTYFGADLAYHFQKAQTADALVDIWGADHAGTVKRIKAAVAALTSADGGTPKPFEVKLVQMVQLLRDGEPVKMSKRSGNFVTLSDVVEEVGKDVVRFTMLTRKPDAQMDFDFAKVVEASKDNPVFYVQYAHARICRNLRKGADEGFAPSSANLDLLGDEELALVKLAAQFPRTIEAAAAAREPHRIAFFLHDLASAFHSFYNLGNDRPDKRFIVAQDSAMTAARLFLAAQIGQVIRNGLAVLGVEAAQEL.

A 'HIGH' region motif is present at residues 136–146 (ANPTGPMHMGH).

The protein belongs to the class-I aminoacyl-tRNA synthetase family. Monomer.

It localises to the cytoplasm. The catalysed reaction is tRNA(Arg) + L-arginine + ATP = L-arginyl-tRNA(Arg) + AMP + diphosphate. This Novosphingobium aromaticivorans (strain ATCC 700278 / DSM 12444 / CCUG 56034 / CIP 105152 / NBRC 16084 / F199) protein is Arginine--tRNA ligase.